The chain runs to 272 residues: MLLEGRFSVVQMNTNRRLKFNQPSRLPNSGKSGIENERVLVLVFESISWDIHTLCTIASLSRRFCAIARRILWRRLCVNRAPGMVAALSGEDPSGRIDGGWHALAKLMFFCGGGESTRYFNLSQPTSGHFACESRFSKTSGRFFLPKNCRRDLLYMSDPCEHQAVGGDEHLGVFRGVFREFMRSKTRECLVRRQAALEEKVRCPYCGGRVWSMTAARLVPKSAARRLGSREGGLEFFVCVNGHLHGTCWLIPLSSEEEDNGEDDDNSDGSVI.

Positions 29–81 (SGKSGIENERVLVLVFESISWDIHTLCTIASLSRRFCAIARRILWRRLCVNRA) constitute an F-box domain.

In Arabidopsis thaliana (Mouse-ear cress), this protein is EID1-like F-box protein 3 (EDL3).